The primary structure comprises 170 residues: Lipoprotein signal peptidase (170 aa).

Helical transmembrane passes span 11-31, 41-61, 69-89, and 95-115; these read LGWLVLSLLVLVIDQVSKAHF, IVVIPDYFSWTLAYNTGAAFS, WQRWLFAVIAVVVSAVLVVWL, and DDTWLAIALALVLGGALGNLY. Residues Asp125 and Asp144 contribute to the active site. The chain crosses the membrane as a helical span at residues 136–156; the sequence is YFPAFNFADSAITVGAIMLAL.

This sequence belongs to the peptidase A8 family.

The protein resides in the cell inner membrane. The catalysed reaction is Release of signal peptides from bacterial membrane prolipoproteins. Hydrolyzes -Xaa-Yaa-Zaa-|-(S,diacylglyceryl)Cys-, in which Xaa is hydrophobic (preferably Leu), and Yaa (Ala or Ser) and Zaa (Gly or Ala) have small, neutral side chains.. Its pathway is protein modification; lipoprotein biosynthesis (signal peptide cleavage). This protein specifically catalyzes the removal of signal peptides from prolipoproteins. The sequence is that of Lipoprotein signal peptidase from Pseudomonas fluorescens.